Consider the following 255-residue polypeptide: Probable iron chelatin transport ATP-binding protein HP_0888 (255 aa).

Residues 3-240 form the ABC transporter domain; that stretch reads LEVKNLSFKY…HNLSALYDTP (238 aa). ATP is bound at residue 35–42; that stretch reads APNGSGKT.

It belongs to the ABC transporter superfamily.

The protein localises to the cell inner membrane. Part of a binding-protein-dependent transport system for an iron chelatin. Probably responsible for energy coupling to the transport system (Potential). The sequence is that of Probable iron chelatin transport ATP-binding protein HP_0888 from Helicobacter pylori (strain ATCC 700392 / 26695) (Campylobacter pylori).